The chain runs to 166 residues: uncharacterized protein (166 aa).

N-acetylalanine is present on A2.

As to quaternary structure, homodimer.

This is an uncharacterized protein from Arabidopsis thaliana (Mouse-ear cress).